Here is a 232-residue protein sequence, read N- to C-terminus: Phosphoribosylformylglycinamidine synthase subunit PurQ (232 aa).

In terms of domain architecture, Glutamine amidotransferase type-1 spans 2 to 232 (KIAILQFGGT…SMVDYITENF (231 aa)). The Nucleophile role is filled by Cys86. Residues His203 and Glu205 contribute to the active site.

As to quaternary structure, part of the FGAM synthase complex composed of 1 PurL, 1 PurQ and 2 PurS subunits.

The protein resides in the cytoplasm. It carries out the reaction N(2)-formyl-N(1)-(5-phospho-beta-D-ribosyl)glycinamide + L-glutamine + ATP + H2O = 2-formamido-N(1)-(5-O-phospho-beta-D-ribosyl)acetamidine + L-glutamate + ADP + phosphate + H(+). It catalyses the reaction L-glutamine + H2O = L-glutamate + NH4(+). The protein operates within purine metabolism; IMP biosynthesis via de novo pathway; 5-amino-1-(5-phospho-D-ribosyl)imidazole from N(2)-formyl-N(1)-(5-phospho-D-ribosyl)glycinamide: step 1/2. Functionally, part of the phosphoribosylformylglycinamidine synthase complex involved in the purines biosynthetic pathway. Catalyzes the ATP-dependent conversion of formylglycinamide ribonucleotide (FGAR) and glutamine to yield formylglycinamidine ribonucleotide (FGAM) and glutamate. The FGAM synthase complex is composed of three subunits. PurQ produces an ammonia molecule by converting glutamine to glutamate. PurL transfers the ammonia molecule to FGAR to form FGAM in an ATP-dependent manner. PurS interacts with PurQ and PurL and is thought to assist in the transfer of the ammonia molecule from PurQ to PurL. The polypeptide is Phosphoribosylformylglycinamidine synthase subunit PurQ (Methanosarcina barkeri (strain Fusaro / DSM 804)).